Consider the following 274-residue polypeptide: Urease accessory protein UreD (274 aa).

Belongs to the UreD family. As to quaternary structure, ureD, UreF and UreG form a complex that acts as a GTP-hydrolysis-dependent molecular chaperone, activating the urease apoprotein by helping to assemble the nickel containing metallocenter of UreC. The UreE protein probably delivers the nickel.

It localises to the cytoplasm. Functionally, required for maturation of urease via the functional incorporation of the urease nickel metallocenter. The sequence is that of Urease accessory protein UreD from Thermosynechococcus vestitus (strain NIES-2133 / IAM M-273 / BP-1).